The chain runs to 288 residues: Bifunctional protein FolD (288 aa).

NADP(+)-binding positions include glycine 166–serine 168 and isoleucine 232.

Belongs to the tetrahydrofolate dehydrogenase/cyclohydrolase family. Homodimer.

It carries out the reaction (6R)-5,10-methylene-5,6,7,8-tetrahydrofolate + NADP(+) = (6R)-5,10-methenyltetrahydrofolate + NADPH. The enzyme catalyses (6R)-5,10-methenyltetrahydrofolate + H2O = (6R)-10-formyltetrahydrofolate + H(+). It functions in the pathway one-carbon metabolism; tetrahydrofolate interconversion. Functionally, catalyzes the oxidation of 5,10-methylenetetrahydrofolate to 5,10-methenyltetrahydrofolate and then the hydrolysis of 5,10-methenyltetrahydrofolate to 10-formyltetrahydrofolate. The sequence is that of Bifunctional protein FolD from Salmonella heidelberg (strain SL476).